Here is a 1371-residue protein sequence, read N- to C-terminus: Soluble scavenger receptor cysteine-rich domain-containing protein SSC5D (1371 aa).

Residues Met1–Ala16 form the signal peptide. Residues Leu20–Val120 enclose the SRCR 1 domain. Cystine bridges form between Cys45/Cys109, Cys58/Cys119, and Cys89/Cys99. Residues Leu143–Pro154 are compositionally biased toward low complexity. The tract at residues Leu143 to Arg200 is disordered. SRCR domains follow at residues Leu199–Thr299 and Ile305–Asp405. 6 disulfides stabilise this stretch: Cys224-Cys288, Cys237-Cys298, Cys268-Cys278, Cys330-Cys394, Cys343-Cys404, and Cys374-Cys384. Asn377 and Asn422 each carry an N-linked (GlcNAc...) asparagine glycan. The segment at Thr431 to Leu466 is disordered. Residues Pro439 to Gly456 are compositionally biased toward pro residues. The region spanning Leu464–Thr565 is the SRCR 4 domain. Intrachain disulfides connect Cys489–Cys554, Cys502–Cys564, and Cys534–Cys544. The segment at Trp592–Phe756 is disordered. The segment covering Thr599 to Gln611 has biased composition (polar residues). Basic residues predominate over residues Lys622–Arg633. Residues Thr653–Thr663 are compositionally biased toward polar residues. Positions Glu665–His676 are enriched in basic and acidic residues. A compositionally biased stretch (polar residues) spans Pro698 to Asp740. Low complexity predominate over residues Pro741–Pro755. In terms of domain architecture, SRCR 5 spans Val758–Thr858. 3 disulfide bridges follow: Cys783–Cys847, Cys796–Cys857, and Cys827–Cys837. Disordered stretches follow at residues Arg888–Pro1270 and Ser1351–Val1371. The span at Ser894 to Pro912 shows a compositional bias: polar residues. Low complexity-rich tracts occupy residues Lys936–Gly957, Pro981–Ser1004, and Gly1018–Pro1035. 2 stretches are compositionally biased toward polar residues: residues Ala1039–Leu1086 and Ser1102–Gln1148. Residues Asn1044 and Asn1131 are each glycosylated (N-linked (GlcNAc...) asparagine). A compositionally biased stretch (pro residues) spans Pro1149 to Asn1163. Over residues Thr1164 to Thr1189 the composition is skewed to polar residues. The span at Ala1218 to Ser1230 shows a compositional bias: low complexity. The segment covering Arg1244–Pro1261 has biased composition (polar residues).

In terms of assembly, interacts with LGALS1 and laminin. Partially N- and O-glycosylated. In terms of tissue distribution, detected throughout the gastrointestinal and genitourinary tracts, in serosal salivary gland, the exocrine part of pancreas and testis, as well as in a few tubular structures in kidney. Not detected in lung and heart (at protein level). Strongly expressed in testis, kidney and pancreas, with lower levels detected in bone marrow, spleen, lung, liver, colon, stomach and skeletal muscle. Very low levels or no expression detected in thymus, esophagus, jejunum, ileum, duodenum, ovary, uterus, heart, trachea, brain, cerebellum and bladder.

It is found in the secreted. The protein resides in the cytoplasm. In terms of biological role, binds to extracellular matrix proteins. Binds to pathogen-associated molecular patterns (PAMPs) present on the cell walls of Gram-positive and Gram-negative bacteria and fungi, behaving as a pattern recognition receptor (PRR). Induces bacterial and fungal aggregation and subsequent inhibition of PAMP-induced cytokine release. Does not possess intrinsic bactericidal activity. May play a role in the innate defense and homeostasis of certain epithelial surfaces. This is Soluble scavenger receptor cysteine-rich domain-containing protein SSC5D (Ssc5d) from Mus musculus (Mouse).